A 90-amino-acid polypeptide reads, in one-letter code: U7-theraphotoxin-Hhn1a 6 (90 aa).

A signal peptide spans 1-19; it reads MKTAIFTVVLALAVFAVLS. The propeptide occupies 20–50; that stretch reads FGWEANEKALSEEFTELIHEKEAASEAEARE. 3 disulfide bridges follow: Cys51-Cys65, Cys58-Cys70, and Cys64-Cys81.

Belongs to the neurotoxin 10 (Hwtx-1) family. 13 (Hntx-13) subfamily. As to expression, expressed by the venom gland.

Its subcellular location is the secreted. Its function is as follows. Ion channel inhibitor. This chain is U7-theraphotoxin-Hhn1a 6, found in Cyriopagopus hainanus (Chinese bird spider).